Consider the following 333-residue polypeptide: MTDAPELKAFDQRLRDEAAEEPTLEVPQGEPKKKTQVIAIYGKGGIGKSFTLANLSYMMAQIGKRVLLIGCDPKSDTTSLLFGGKACPTIIETSARKKLAGEEVQIGDVCFKRDGVFAMELGGPEVGRGCGGRGIIHGFELLEKLGFHDWDFDYVLLDFLGDVVCGGFGLPIARDMAQKVILVGSNDLQSLYVTNNVCSAVEYFRKLGGNVGVAGLVINKDDGTGEAKAFAEAADIPILATIPADEDLRRKSANYQIVGIPGTQWGPLFEGLAHAVGEAPPIRPKPLSQDGLLDLFTPEAIGADFKLEPATDADMRGKNAAAKKSLEVIYDDA.

Positions 1-17 are enriched in basic and acidic residues; it reads MTDAPELKAFDQRLRDE. The segment at 1–30 is disordered; it reads MTDAPELKAFDQRLRDEAAEEPTLEVPQGE. ATP-binding positions include 45 to 50 and K74; that span reads GIGKSF. S49 contributes to the Mg(2+) binding site. [4Fe-4S] cluster-binding residues include C130 and C165. 219–220 provides a ligand contact to ATP; sequence NK.

Belongs to the NifH/BchL/ChlL family. Homodimer. Chlorophyllide reductase is composed of three subunits; BchX, BchY and BchZ. The cofactor is [4Fe-4S] cluster.

It catalyses the reaction 3-deacetyl-3-vinylbacteriochlorophyllide a + 2 oxidized [2Fe-2S]-[ferredoxin] + ADP + phosphate = chlorophyllide a + 2 reduced [2Fe-2S]-[ferredoxin] + ATP + H2O + H(+). The catalysed reaction is bacteriochlorophyllide a + 2 oxidized [2Fe-2S]-[ferredoxin] + ADP + phosphate = 3-acetyl-3-devinylchlorophyllide a + 2 reduced [2Fe-2S]-[ferredoxin] + ATP + H2O + H(+). The enzyme catalyses 3-deacetyl-3-(1-hydroxyethyl)bacteriochlorophyllide a + 2 oxidized [2Fe-2S]-[ferredoxin] + ADP + phosphate = 3-devinyl-3-(1-hydroxyethyl)chlorophyllide a + 2 reduced [2Fe-2S]-[ferredoxin] + ATP + H2O + H(+). The protein operates within porphyrin-containing compound metabolism; bacteriochlorophyll biosynthesis. Its function is as follows. Converts chlorophylls (Chl) into bacteriochlorophylls (BChl) by reducing ring B of the tetrapyrrole. The protein is Chlorophyllide reductase 35.5 kDa chain (bchX) of Cereibacter sphaeroides (strain ATCC 17023 / DSM 158 / JCM 6121 / CCUG 31486 / LMG 2827 / NBRC 12203 / NCIMB 8253 / ATH 2.4.1.) (Rhodobacter sphaeroides).